The primary structure comprises 95 residues: Small ribosomal subunit protein bS6 (95 aa).

Belongs to the bacterial ribosomal protein bS6 family.

Binds together with bS18 to 16S ribosomal RNA. The protein is Small ribosomal subunit protein bS6 of Shouchella clausii (strain KSM-K16) (Alkalihalobacillus clausii).